An 812-amino-acid chain; its full sequence is Transcription-repair-coupling factor (812 aa).

The Helicase ATP-binding domain occupies 280-441 (DMSKPIPMDR…MTGIKDLSII (162 aa)). 293 to 300 (GDVGFGKT) is an ATP binding site. Positions 394–397 (DEEH) match the DEEH box motif. The region spanning 462-621 (LIRKTILREI…NQDLEIRGVG (160 aa)) is the Helicase C-terminal domain.

In the N-terminal section; belongs to the UvrB family. It in the C-terminal section; belongs to the helicase family. RecG subfamily.

Its subcellular location is the cytoplasm. Its function is as follows. Couples transcription and DNA repair by recognizing RNA polymerase (RNAP) stalled at DNA lesions. Mediates ATP-dependent release of RNAP and its truncated transcript from the DNA, and recruitment of nucleotide excision repair machinery to the damaged site. This Buchnera aphidicola subsp. Acyrthosiphon pisum (strain APS) (Acyrthosiphon pisum symbiotic bacterium) protein is Transcription-repair-coupling factor (mfd).